We begin with the raw amino-acid sequence, 320 residues long: MYRSTLLFLFIALVNAFANPGPCTGDCWTHDPGLYQRKSDGRYFRFATGGGIHISSAPAIVGPWEDNGFALPNGSKINHAGNDNLWAPDVHYQENTKKYYMYYSVSVLGKKDSVIGVASSDTMEVGSWTDHGSIGLNTSNNPPYNTIDANWIRIDGAPALNFGSYWQGIFQVPLKNPFELAEIAPHQIAWNASLNHRIEAAFEFKHGNYYYLTFSSGLGGNYDVNLPAQGEEYSIHVCRSEGGRNNFVDKSGRSCRESGGTTLLASHGNVYAPGGQGIVEDKNLGQVLYYHYADKTKGLAKTDYQFGWNRLNWVDGWPSV.

The N-terminal stretch at 1–16 (MYRSTLLFLFIALVNA) is a signal peptide. Catalysis depends on Asp-31, which acts as the Proton acceptor. N-linked (GlcNAc...) asparagine glycans are attached at residues Asn-73, Asn-137, and Asn-191. Glu-199 functions as the Proton donor in the catalytic mechanism.

Belongs to the glycosyl hydrolase 43 family.

The protein resides in the secreted. The enzyme catalyses Endohydrolysis of (1-&gt;5)-alpha-arabinofuranosidic linkages in (1-&gt;5)-arabinans.. It functions in the pathway glycan metabolism; L-arabinan degradation. Endo-1,5-alpha-L-arabinanase involved in degradation of pectin. Its preferred substrate is linear 1,5-alpha-L-arabinan. The polypeptide is Probable arabinan endo-1,5-alpha-L-arabinosidase C (abnC) (Aspergillus terreus (strain NIH 2624 / FGSC A1156)).